The primary structure comprises 469 residues: 3-isopropylmalate dehydratase large subunit (469 aa).

Residues Cys-347, Cys-410, and Cys-413 each contribute to the [4Fe-4S] cluster site.

Belongs to the aconitase/IPM isomerase family. LeuC type 1 subfamily. Heterodimer of LeuC and LeuD. [4Fe-4S] cluster is required as a cofactor.

It catalyses the reaction (2R,3S)-3-isopropylmalate = (2S)-2-isopropylmalate. Its pathway is amino-acid biosynthesis; L-leucine biosynthesis; L-leucine from 3-methyl-2-oxobutanoate: step 2/4. Its function is as follows. Catalyzes the isomerization between 2-isopropylmalate and 3-isopropylmalate, via the formation of 2-isopropylmaleate. In Burkholderia lata (strain ATCC 17760 / DSM 23089 / LMG 22485 / NCIMB 9086 / R18194 / 383), this protein is 3-isopropylmalate dehydratase large subunit.